A 194-amino-acid chain; its full sequence is Imidazoleglycerol-phosphate dehydratase (194 aa).

Belongs to the imidazoleglycerol-phosphate dehydratase family.

It is found in the cytoplasm. It carries out the reaction D-erythro-1-(imidazol-4-yl)glycerol 3-phosphate = 3-(imidazol-4-yl)-2-oxopropyl phosphate + H2O. Its pathway is amino-acid biosynthesis; L-histidine biosynthesis; L-histidine from 5-phospho-alpha-D-ribose 1-diphosphate: step 6/9. The chain is Imidazoleglycerol-phosphate dehydratase from Streptococcus thermophilus (strain ATCC BAA-491 / LMD-9).